A 238-amino-acid chain; its full sequence is Ribosomal RNA small subunit methyltransferase G (238 aa).

S-adenosyl-L-methionine contacts are provided by residues Gly-80, 131-132 (AE), and Arg-148.

This sequence belongs to the methyltransferase superfamily. RNA methyltransferase RsmG family.

It localises to the cytoplasm. Specifically methylates the N7 position of a guanine in 16S rRNA. This is Ribosomal RNA small subunit methyltransferase G from Thermotoga maritima (strain ATCC 43589 / DSM 3109 / JCM 10099 / NBRC 100826 / MSB8).